The following is an 81-amino-acid chain: EC protein III (81 aa).

Belongs to the metallothionein superfamily. Type 15 family.

Binds 5 molecules of zinc. May have a role in Zn(2+) homeostasis during embryogenesis. The chain is EC protein III from Triticum aestivum (Wheat).